A 65-amino-acid chain; its full sequence is Sec-independent protein translocase protein TatA (65 aa).

Residues 9–29 form a helical membrane-spanning segment; that stretch reads ILIIVLLVVVVFGVGKLPQVG. The interval 40-65 is disordered; the sequence is RKASTGEDAKEEVETKEETKPAEKSE. Positions 43-65 are enriched in basic and acidic residues; that stretch reads STGEDAKEEVETKEETKPAEKSE.

The protein belongs to the TatA/E family. Forms a complex with TatC.

It is found in the cell membrane. Part of the twin-arginine translocation (Tat) system that transports large folded proteins containing a characteristic twin-arginine motif in their signal peptide across membranes. TatA could form the protein-conducting channel of the Tat system. In Dehalococcoides mccartyi (strain ATCC BAA-2100 / JCM 16839 / KCTC 5957 / BAV1), this protein is Sec-independent protein translocase protein TatA.